The following is a 376-amino-acid chain: MKVLTVFGTRPEAIKMAPLVHALAQDDAFESRVCVTAQHREMLDQVLRLFEIQPDYDLDIMRPGQGLTEITCRILEGLKPVLEEFKPDVILVHGDTTTTLSASLAGFYHRIPVGHVEAGLRTGDLYSPWPEEANRQLTGHLAMYHFAPTENSRQNLLREWVPENRIFVTGNTVIDALFWVRDRVMNTPDLRANLAQRYAFLDTNKKMILVTGHRRESFGGGFERICSALAEIARKHPEVQVVYPVHLNPNVSEPVNRILKGIDNIILIDPQDYLPFVYLMNHAYLILTDSGGIQEEAPSLGKPVLVMRDTTERPEAVDSGTVLLVGTNINKIVDAVTRLLTDETAYHQMTRAHNPYGDGYACQRILKALKNHQVTL.

Substrate-binding positions include Arg10, Lys15, Asp95, Glu117, His213, Gln271, Phe276, 290–292 (SGG), Glu296, and Arg313.

This sequence belongs to the UDP-N-acetylglucosamine 2-epimerase family. In terms of assembly, homodimer.

Its subcellular location is the cytoplasm. It carries out the reaction UDP-N-acetyl-alpha-D-glucosamine = UDP-N-acetyl-alpha-D-mannosamine. It functions in the pathway bacterial outer membrane biogenesis; enterobacterial common antigen biosynthesis. In terms of biological role, catalyzes the reversible epimerization at C-2 of UDP-N-acetylglucosamine (UDP-GlcNAc) and thereby provides bacteria with UDP-N-acetylmannosamine (UDP-ManNAc), the activated donor of ManNAc residues. This is UDP-N-acetylglucosamine 2-epimerase from Yersinia pestis.